The following is a 461-amino-acid chain: Cysteine--tRNA ligase (461 aa).

Cys-28 serves as a coordination point for Zn(2+). The 'HIGH' region signature appears at 30 to 40 (ITIYDLCHIGH). Zn(2+)-binding residues include Cys-209, His-234, and Glu-238. The 'KMSKS' region signature appears at 266-270 (KMSKS). An ATP-binding site is contributed by Lys-269.

It belongs to the class-I aminoacyl-tRNA synthetase family. As to quaternary structure, monomer. It depends on Zn(2+) as a cofactor.

It localises to the cytoplasm. The enzyme catalyses tRNA(Cys) + L-cysteine + ATP = L-cysteinyl-tRNA(Cys) + AMP + diphosphate. The chain is Cysteine--tRNA ligase from Yersinia pseudotuberculosis serotype IB (strain PB1/+).